The following is a 440-amino-acid chain: Ribulose bisphosphate carboxylase large chain (440 aa).

N6,N6,N6-trimethyllysine is present on K4. Residues N113 and T163 each contribute to the substrate site. The active-site Proton acceptor is K165. K167 provides a ligand contact to substrate. Mg(2+)-binding residues include K191, D193, and E194. The residue at position 191 (K191) is an N6-carboxylysine. The active-site Proton acceptor is H284. R285, H317, and S369 together coordinate substrate.

Belongs to the RuBisCO large chain family. Type I subfamily. Heterohexadecamer of 8 large chains and 8 small chains; disulfide-linked. The disulfide link is formed within the large subunit homodimers. The cofactor is Mg(2+). Post-translationally, the disulfide bond which can form in the large chain dimeric partners within the hexadecamer appears to be associated with oxidative stress and protein turnover.

It is found in the plastid. The protein localises to the chloroplast. The enzyme catalyses 2 (2R)-3-phosphoglycerate + 2 H(+) = D-ribulose 1,5-bisphosphate + CO2 + H2O. It carries out the reaction D-ribulose 1,5-bisphosphate + O2 = 2-phosphoglycolate + (2R)-3-phosphoglycerate + 2 H(+). RuBisCO catalyzes two reactions: the carboxylation of D-ribulose 1,5-bisphosphate, the primary event in carbon dioxide fixation, as well as the oxidative fragmentation of the pentose substrate in the photorespiration process. Both reactions occur simultaneously and in competition at the same active site. In Polystichum munitum (Western sword-fern), this protein is Ribulose bisphosphate carboxylase large chain.